Reading from the N-terminus, the 474-residue chain is Probable multidrug resistance protein NorM (474 aa).

Transmembrane regions (helical) follow at residues 33-50 (LWLA…IAMM), 65-87 (VAAA…GLVS), 108-130 (SLRV…QLYG), 150-172 (YLDG…GLMG), 179-201 (PALW…LIHG), 211-233 (FGAG…VVCV), 258-280 (LLQL…GAAA), 295-317 (QIAL…AATV), 334-356 (AGFA…VALT), 376-398 (TLTA…QVVA), 410-432 (VPLL…VLGF), and 436-458 (LGPF…LLVW).

It belongs to the multi antimicrobial extrusion (MATE) (TC 2.A.66.1) family.

The protein localises to the cell inner membrane. Multidrug efflux pump. The sequence is that of Probable multidrug resistance protein NorM (norM) from Rhodopseudomonas palustris (strain ATCC BAA-98 / CGA009).